The following is a 215-amino-acid chain: Peptide methionine sulfoxide reductase MsrA (215 aa).

Cys-58 is a catalytic residue.

This sequence belongs to the MsrA Met sulfoxide reductase family.

The enzyme catalyses L-methionyl-[protein] + [thioredoxin]-disulfide + H2O = L-methionyl-(S)-S-oxide-[protein] + [thioredoxin]-dithiol. It catalyses the reaction [thioredoxin]-disulfide + L-methionine + H2O = L-methionine (S)-S-oxide + [thioredoxin]-dithiol. In terms of biological role, has an important function as a repair enzyme for proteins that have been inactivated by oxidation. Catalyzes the reversible oxidation-reduction of methionine sulfoxide in proteins to methionine. In Pseudomonas syringae pv. tomato (strain ATCC BAA-871 / DC3000), this protein is Peptide methionine sulfoxide reductase MsrA.